The sequence spans 446 residues: tRNA wybutosine-synthesizing protein 2 homolog (446 aa).

Residues Ser208, Lys215, Glu255, and Asp283 to Asn284 contribute to the S-adenosyl-L-methionine site.

This sequence belongs to the class I-like SAM-binding methyltransferase superfamily. TRM5/TYW2 family.

It catalyses the reaction 4-demethylwyosine(37) in tRNA(Phe) + S-adenosyl-L-methionine = 4-demethyl-7-[(3S)-3-amino-3-carboxypropyl]wyosine(37) in tRNA(Phe) + S-methyl-5'-thioadenosine + H(+). Its pathway is tRNA modification; wybutosine-tRNA(Phe) biosynthesis. S-adenosyl-L-methionine-dependent transferase that acts as a component of the wybutosine biosynthesis pathway. Wybutosine is a hyper modified guanosine with a tricyclic base found at the 3'-position adjacent to the anticodon of eukaryotic phenylalanine tRNA. Catalyzes the transfer of the alpha-amino-alpha-carboxypropyl (acp) group from S-adenosyl-L-methionine to the C-7 position of 4-demethylwyosine (imG-14) to produce wybutosine-86. The sequence is that of tRNA wybutosine-synthesizing protein 2 homolog (Trmt12) from Mus musculus (Mouse).